A 63-amino-acid chain; its full sequence is Chromatin protein Cren7 (63 aa).

It belongs to the Cren7 family. As to quaternary structure, monomer. In terms of processing, methylated at multiple sites, to varying extents.

The protein localises to the chromosome. It localises to the cytoplasm. In terms of biological role, a chromatin protein, binds double-stranded DNA without sequence specificity. Constrains negative DNA supercoils. The chain is Chromatin protein Cren7 from Pyrobaculum calidifontis (strain DSM 21063 / JCM 11548 / VA1).